The following is a 614-amino-acid chain: Afadin- and alpha-actinin-binding protein (614 aa).

2 coiled-coil regions span residues 131-227 and 266-293; these read MDHL…IAMD and RQKQILMENAELKKVLQQMKKEMISLLS. Phosphoserine occurs at positions 290, 293, and 312. Positions 292–317 are disordered; sequence LSPQKKKPRERVDDSTGTVISDVEED. A coiled-coil region spans residues 374-460; it reads ISRQDHEQET…RSFTEAAIRL (87 aa). S536, S540, and S542 each carry phosphoserine.

Belongs to the ADIP family. Interacts with afadin and alpha-actinin. Interacts with VAV2. Interacts with SSX2 and SSX3. Does not interact with SSX1 and SSX4. Interacts with PCM1. Interacts with WRAP73. In terms of tissue distribution, widely expressed, with the highest expression in brain, intermediate expression in kidney, testis, spinal cord, liver, heart, lung, skeletal muscle, ovary, fetal liver and fetal brain, and little to no expression in pancreas and spleen. All specific brain regions showed intermediate to high expression, with highest expression in amygdala. Also expressed in fetal tissues, mainly in liver and brain.

The protein resides in the cell junction. Its subcellular location is the adherens junction. It localises to the nucleus. The protein localises to the cytoplasm. It is found in the cytoskeleton. The protein resides in the microtubule organizing center. Its subcellular location is the centrosome. It localises to the centriolar satellite. The protein localises to the cilium basal body. Belongs to an adhesion system, which plays a role in the organization of homotypic, interneuronal and heterotypic cell-cell adherens junctions (AJs). May connect the nectin-afadin and E-cadherin-catenin system through alpha-actinin and may be involved in organization of the actin cytoskeleton at AJs through afadin and alpha-actinin. Involved in cell movement: localizes at the leading edge of moving cells in response to PDGF and is required for the formation of the leading edge and the promotion of cell movement, possibly via activation of Rac signaling. Acts as a centrosome maturation factor, probably by maintaining the integrity of the pericentriolar material and proper microtubule nucleation at mitotic spindle poles. The function seems to implicate at least in part WRAP73; the SSX2IP:WRAP73 complex is proposed to act as regulator of spindle anchoring at the mitotic centrosome. Involved in ciliogenesis. It is required for targeted recruitment of the BBSome, CEP290, RAB8, and SSTR3 to the cilia. This chain is Afadin- and alpha-actinin-binding protein (SSX2IP), found in Homo sapiens (Human).